The primary structure comprises 597 residues: Exochitinase 1 (597 aa).

Positions 1–29 (MDRFRPLAVLIAAALTLSGTTALSSAARA) form a signal peptide, or 32. The 82-residue stretch at 172–253 (PPTGLRTGSV…ATVTATTAPG (82 aa)) folds into the Fibronectin type-III domain. Positions 264–597 (HALVGYLHAS…FQRTFDGYFG (334 aa)) constitute a GH18 domain. Glu384 serves as the catalytic Proton donor.

It belongs to the glycosyl hydrolase 18 family. Chitinase class II subfamily. Post-translationally, the N-terminus is blocked.

It catalyses the reaction Random endo-hydrolysis of N-acetyl-beta-D-glucosaminide (1-&gt;4)-beta-linkages in chitin and chitodextrins.. Its activity is regulated as follows. Inhibited by the pseudosugar allosamidin A. Functionally, exochitinase that generates exclusively chitobiose from chitotetraose, chitohexaose, and colloidal high-molecular mass chitin. The polypeptide is Exochitinase 1 (chi01) (Streptomyces olivaceoviridis (Streptomyces corchorusii)).